We begin with the raw amino-acid sequence, 226 residues long: Probable functional amyloid protease FapD (226 aa).

Residues Met1–Ala18 form the signal peptide. Positions Gln50 to Val180 constitute a Peptidase C39 domain. Cys56 is an active-site residue.

This sequence belongs to the FapD family.

The protein resides in the periplasm. Its function is as follows. Probable protease that might be involved in processing fibril precursors. Upon overexpression of the endogenous six-gene locus (fapA-fapF), cells form large clumps during liquid growth, make large amounts of biofilm and produce amyloid fibrils. The sequence is that of Probable functional amyloid protease FapD from Pseudomonas aeruginosa (strain ATCC 15692 / DSM 22644 / CIP 104116 / JCM 14847 / LMG 12228 / 1C / PRS 101 / PAO1).